The sequence spans 371 residues: Putative glutamate--cysteine ligase 2 (371 aa).

Belongs to the glutamate--cysteine ligase type 2 family. YbdK subfamily.

The enzyme catalyses L-cysteine + L-glutamate + ATP = gamma-L-glutamyl-L-cysteine + ADP + phosphate + H(+). In terms of biological role, ATP-dependent carboxylate-amine ligase which exhibits weak glutamate--cysteine ligase activity. In Burkholderia lata (strain ATCC 17760 / DSM 23089 / LMG 22485 / NCIMB 9086 / R18194 / 383), this protein is Putative glutamate--cysteine ligase 2.